Here is a 238-residue protein sequence, read N- to C-terminus: MSGLPESKLGTKQYWDNVYEREVSNFTEFNDEGEVWFGEEAEERIVQWLEDHISTSFREVSEAAPFRVLDLGTGNGHLLFRLLEEEDTLLPSPCQLVGVDYSEAAIVLAKNIARHRQFSDKVKFQQLDIIKDSKFCSKDWDLILDKGTFDAISLSGELLDGRPLNSVYVDRVRGMLSPNGIFLITSCNWTIQELEERFTKNGFIVHSTVPVPVFEFQGSTGSSTSVIAFQIDPSFNRK.

It belongs to the class I-like SAM-binding methyltransferase superfamily. EFM4 family.

Its subcellular location is the cytoplasm. It localises to the nucleus. Functionally, S-adenosyl-L-methionine-dependent protein-lysine N-methyltransferase that mono- and dimethylates elongation factor 1-alpha at 'Lys-316'. May play a role in intracellular transport. The protein is Protein-lysine N-methyltransferase efm4 of Schizosaccharomyces pombe (strain 972 / ATCC 24843) (Fission yeast).